Reading from the N-terminus, the 303-residue chain is Oxygen-dependent coproporphyrinogen-III oxidase (303 aa).

Serine 93 is a binding site for substrate. A divalent metal cation contacts are provided by histidine 97 and histidine 107. The active-site Proton donor is the histidine 107. Position 109–111 (109–111 (NIR)) interacts with substrate. Residues histidine 146 and histidine 176 each contribute to the a divalent metal cation site. An important for dimerization region spans residues 241-276 (YVEFNLLLDRGTLFGIQSNGRIESILSSMPPLVKWE).

This sequence belongs to the aerobic coproporphyrinogen-III oxidase family. As to quaternary structure, homodimer. A divalent metal cation serves as cofactor.

The protein resides in the cytoplasm. It carries out the reaction coproporphyrinogen III + O2 + 2 H(+) = protoporphyrinogen IX + 2 CO2 + 2 H2O. It participates in porphyrin-containing compound metabolism; protoporphyrin-IX biosynthesis; protoporphyrinogen-IX from coproporphyrinogen-III (O2 route): step 1/1. Involved in the heme biosynthesis. Catalyzes the aerobic oxidative decarboxylation of propionate groups of rings A and B of coproporphyrinogen-III to yield the vinyl groups in protoporphyrinogen-IX. This chain is Oxygen-dependent coproporphyrinogen-III oxidase, found in Wigglesworthia glossinidia brevipalpis.